The sequence spans 559 residues: MEAALAACALPSLRILNTKPRFRCSFSNPSLPISPNSLITRKSSRFTTAVSSPPSSSAATSTNSPPEPEALFEPGSDKFDWYANWYPVMPICDLDKKVPHGKKVMGIDLVVWWDRNEKQWKVMDDTCPHRLAPLSDGRIDQWGRLQCVYHGWCFNGSGDCKLIPQAPPDGPPVHTFKQACVAVYPSTVQHEIIWFWPNSDPKYKNIIETNKPPYIPELEDPSFTKLMGNRDIPYGYDVLVENLMDPAHVPYAHYGLMRFPKPKGKYIICISNSCFNPFTNLQILLAEKIDREGGKPLEINVKKLDNKGFFSKQEWGYSNFIAPCVYRSSTDPLPEQEHEYPAPAASDKAALSKRRLSLIFICIPVSPGRSRLIWTFPRNFGVFIDKIVPRWVFHIGQNTILDSDLHLLHVEERKILERGPENWQKACFIPTKSDANVVTFRRWFNKYSEARVDWRGKFDPFLLPPTPPREQLFDRYWSHVENCSSCKKAHKYLNALEVILQIASVAMIGVMAVLKQTTMSNVARIAVLVAAVLSFAASKWLSHFIYKTFHYHDYNHAVV.

A chloroplast-targeting transit peptide spans M1–S55. The tract at residues S44–A70 is disordered. The segment covering T47–S64 has biased composition (low complexity). One can recognise a Rieske domain in the interval W85–F195. 4 residues coordinate [2Fe-2S] cluster: C127, H129, C147, and H150. Residues H248 and H253 each coordinate Fe cation. The Redox-active motif signature appears at C483–C486. 2 helical membrane passes run L493–V513 and I525–I545.

Requires [2Fe-2S] cluster as cofactor.

Its subcellular location is the plastid. It localises to the chloroplast inner membrane. The catalysed reaction is protochlorophyllide a + 4 reduced [2Fe-2S]-[ferredoxin] + 2 O2 + 5 H(+) = protochlorophyllide b + 4 oxidized [2Fe-2S]-[ferredoxin] + 3 H2O. Its activity is regulated as follows. Down-regulated by light. Part of a translocon most abundantly expressed in etiolated plants and involved in the protochlorophyllide-dependent import of the precursor NADPH:protochlorophyllide oxidoreductase A (pPORA). This Arabidopsis thaliana (Mouse-ear cress) protein is Protochlorophyllide-dependent translocon component 52, chloroplastic.